Here is a 393-residue protein sequence, read N- to C-terminus: Yellow-related salivary protein SP03B (393 aa).

An N-terminal signal peptide occupies residues 1-18 (MKIFLCLIAVVFLQGVVG). Residue N29 is glycosylated (N-linked (GlcNAc...) asparagine).

The protein belongs to the major royal jelly protein family. Female salivary gland (at protein level).

It localises to the secreted. In terms of biological role, probably modulates blood feeding of sand flies on vertebrate species by binding and sequestering different mediators involved in the host response. Binds biogenic amines. Binds serotonin with high affinity. Poorly binds histamine. Does not bind dopamine, noradrenaline, adrenaline and octopamine. This Phlebotomus perniciosus (Phlebotomine sand fly) protein is Yellow-related salivary protein SP03B.